The primary structure comprises 369 residues: Chorismate synthase (369 aa).

Residues R48 and R54 each contribute to the NADP(+) site. FMN is bound by residues 125–127 (RSS), 238–239 (NA), G278, 293–297 (KPTSS), and R319.

It belongs to the chorismate synthase family. In terms of assembly, homotetramer. Requires FMNH2 as cofactor.

The enzyme catalyses 5-O-(1-carboxyvinyl)-3-phosphoshikimate = chorismate + phosphate. It participates in metabolic intermediate biosynthesis; chorismate biosynthesis; chorismate from D-erythrose 4-phosphate and phosphoenolpyruvate: step 7/7. Functionally, catalyzes the anti-1,4-elimination of the C-3 phosphate and the C-6 proR hydrogen from 5-enolpyruvylshikimate-3-phosphate (EPSP) to yield chorismate, which is the branch point compound that serves as the starting substrate for the three terminal pathways of aromatic amino acid biosynthesis. This reaction introduces a second double bond into the aromatic ring system. The chain is Chorismate synthase from Burkholderia mallei (strain NCTC 10229).